Here is a 173-residue protein sequence, read N- to C-terminus: Inorganic pyrophosphatase (173 aa).

Positions 26, 40, and 52 each coordinate substrate. Mg(2+) contacts are provided by Asp-62, Asp-67, and Asp-99. Tyr-138 contacts substrate.

The protein belongs to the PPase family. Homohexamer. It depends on Mg(2+) as a cofactor.

The protein localises to the cytoplasm. The enzyme catalyses diphosphate + H2O = 2 phosphate + H(+). Catalyzes the hydrolysis of inorganic pyrophosphate (PPi) forming two phosphate ions. The sequence is that of Inorganic pyrophosphatase from Sulfolobus acidocaldarius (strain ATCC 33909 / DSM 639 / JCM 8929 / NBRC 15157 / NCIMB 11770).